The chain runs to 184 residues: Deoxyuridine 5'-triphosphate nucleotidohydrolase (184 aa).

The span at 1 to 16 shows a compositional bias: polar residues; it reads MPHTQTDAHQNNQENF. The segment at 1–25 is disordered; that stretch reads MPHTQTDAHQNNQENFSSSLISSRP. Residues 96–98, Asn-109, 113–115, and Lys-123 contribute to the substrate site; these read RSG and TID. Positions 165-184 are disordered; sequence STKNTVGNRGAGGFGSTGHD. The span at 173–184 shows a compositional bias: gly residues; it reads RGAGGFGSTGHD.

This sequence belongs to the dUTPase family. It depends on Mg(2+) as a cofactor.

The catalysed reaction is dUTP + H2O = dUMP + diphosphate + H(+). Its pathway is pyrimidine metabolism; dUMP biosynthesis; dUMP from dCTP (dUTP route): step 2/2. Its function is as follows. This enzyme is involved in nucleotide metabolism: it produces dUMP, the immediate precursor of thymidine nucleotides and it decreases the intracellular concentration of dUTP so that uracil cannot be incorporated into DNA. The chain is Deoxyuridine 5'-triphosphate nucleotidohydrolase from Bartonella henselae (strain ATCC 49882 / DSM 28221 / CCUG 30454 / Houston 1) (Rochalimaea henselae).